The chain runs to 299 residues: Regucalcin (299 aa).

A divalent metal cation is bound at residue Glu-18. The substrate site is built by Arg-101, Asn-103, and Glu-121. Lys-144 is subject to N6-succinyllysine. Asn-154 and Asp-204 together coordinate a divalent metal cation. Asp-204 (proton donor/acceptor) is an active-site residue. Residues Lys-244 and Lys-253 each carry the N6-succinyllysine modification.

Belongs to the SMP-30/CGR1 family. As to quaternary structure, monomer. The cofactor is Zn(2+). It depends on Mn(2+) as a cofactor. Requires Ca(2+) as cofactor. Mg(2+) serves as cofactor. Mainly present in the liver. Weak expression was found in the brain, lung and kidney.

It is found in the cytoplasm. The enzyme catalyses D-glucono-1,5-lactone + H2O = D-gluconate + H(+). It functions in the pathway cofactor biosynthesis; L-ascorbate biosynthesis via UDP-alpha-D-glucuronate pathway; L-ascorbate from UDP-alpha-D-glucuronate: step 3/4. Gluconolactonase with low activity towards other sugar lactones, including gulonolactone and galactonolactone. Catalyzes a key step in ascorbic acid (vitamin C) biosynthesis. Can also hydrolyze diisopropyl phosphorofluoridate and phenylacetate (in vitro). Calcium-binding protein. Modulates Ca(2+) signaling, and Ca(2+)-dependent cellular processes and enzyme activities. This is Regucalcin (Rgn) from Mus musculus (Mouse).